Reading from the N-terminus, the 297-residue chain is 4-hydroxy-tetrahydrodipicolinate synthase (297 aa).

T46 serves as a coordination point for pyruvate. Catalysis depends on Y134, which acts as the Proton donor/acceptor. The Schiff-base intermediate with substrate role is filled by K162. I204 is a binding site for pyruvate.

This sequence belongs to the DapA family. As to quaternary structure, homotetramer; dimer of dimers.

It localises to the cytoplasm. It carries out the reaction L-aspartate 4-semialdehyde + pyruvate = (2S,4S)-4-hydroxy-2,3,4,5-tetrahydrodipicolinate + H2O + H(+). It functions in the pathway amino-acid biosynthesis; L-lysine biosynthesis via DAP pathway; (S)-tetrahydrodipicolinate from L-aspartate: step 3/4. Catalyzes the condensation of (S)-aspartate-beta-semialdehyde [(S)-ASA] and pyruvate to 4-hydroxy-tetrahydrodipicolinate (HTPA). The chain is 4-hydroxy-tetrahydrodipicolinate synthase from Stenotrophomonas maltophilia (strain R551-3).